The primary structure comprises 235 residues: Carboxy-S-adenosyl-L-methionine synthase (235 aa).

S-adenosyl-L-methionine contacts are provided by residues Y35, 60–62 (GCS), 83–84 (DN), N124, and R191.

Belongs to the class I-like SAM-binding methyltransferase superfamily. Cx-SAM synthase family. As to quaternary structure, homodimer.

It catalyses the reaction prephenate + S-adenosyl-L-methionine = carboxy-S-adenosyl-L-methionine + 3-phenylpyruvate + H2O. Catalyzes the conversion of S-adenosyl-L-methionine (SAM) to carboxy-S-adenosyl-L-methionine (Cx-SAM). The polypeptide is Carboxy-S-adenosyl-L-methionine synthase (Campylobacter jejuni subsp. jejuni serotype O:6 (strain 81116 / NCTC 11828)).